The following is a 430-amino-acid chain: Tol-Pal system protein TolB (430 aa).

The first 21 residues, 1–21 (MKQALRVAFGFLMLWAAVLHA), serve as a signal peptide directing secretion.

The protein belongs to the TolB family. The Tol-Pal system is composed of five core proteins: the inner membrane proteins TolA, TolQ and TolR, the periplasmic protein TolB and the outer membrane protein Pal. They form a network linking the inner and outer membranes and the peptidoglycan layer.

It localises to the periplasm. Its function is as follows. Part of the Tol-Pal system, which plays a role in outer membrane invagination during cell division and is important for maintaining outer membrane integrity. TolB occupies a key intermediary position in the Tol-Pal system because it communicates directly with both membrane-embedded components, Pal in the outer membrane and TolA in the inner membrane. The polypeptide is Tol-Pal system protein TolB (Klebsiella pneumoniae (strain 342)).